The chain runs to 471 residues: Glutamate--tRNA ligase 1 (471 aa).

The short motif at 10-20 is the 'HIGH' region element; sequence PSPTGFLHIGG. The interval 113–140 is disordered; the sequence is ARKEGRPPRYDGRWRDRDPSEAPKDRDP. The short motif at 239–243 is the 'KMSKS' region element; that stretch reads KLSKR. Lys242 contacts ATP.

It belongs to the class-I aminoacyl-tRNA synthetase family. Glutamate--tRNA ligase type 1 subfamily. As to quaternary structure, monomer.

The protein localises to the cytoplasm. It carries out the reaction tRNA(Glu) + L-glutamate + ATP = L-glutamyl-tRNA(Glu) + AMP + diphosphate. In terms of biological role, catalyzes the attachment of glutamate to tRNA(Glu) in a two-step reaction: glutamate is first activated by ATP to form Glu-AMP and then transferred to the acceptor end of tRNA(Glu). The protein is Glutamate--tRNA ligase 1 of Xanthobacter autotrophicus (strain ATCC BAA-1158 / Py2).